The following is a 268-amino-acid chain: NAD kinase (268 aa).

Aspartate 45 serves as the catalytic Proton acceptor. Residues 45-46, 122-123, arginine 148, aspartate 150, 161-166, alanine 185, and glutamine 223 contribute to the NAD(+) site; these read DG, NE, and TAYGKS.

The protein belongs to the NAD kinase family. A divalent metal cation serves as cofactor.

It localises to the cytoplasm. The catalysed reaction is NAD(+) + ATP = ADP + NADP(+) + H(+). Functionally, involved in the regulation of the intracellular balance of NAD and NADP, and is a key enzyme in the biosynthesis of NADP. Catalyzes specifically the phosphorylation on 2'-hydroxyl of the adenosine moiety of NAD to yield NADP. This is NAD kinase from Latilactobacillus sakei subsp. sakei (strain 23K) (Lactobacillus sakei subsp. sakei).